The sequence spans 434 residues: Lecithin-cholesterol acyltransferase-like 1 (434 aa).

Ser191 acts as the Acyl-ester intermediate in catalysis. Catalysis depends on charge relay system residues Asp354 and His386.

This sequence belongs to the AB hydrolase superfamily. Lipase family.

The sequence is that of Lecithin-cholesterol acyltransferase-like 1 from Oryza sativa subsp. japonica (Rice).